The following is a 48-amino-acid chain: Protein TUNAR (48 aa).

Residues 1-20 (MVITSENDEDRGGQEKESKE) are disordered. A compositionally biased stretch (basic and acidic residues) spans 10 to 20 (DRGGQEKESKE). The helical transmembrane segment at 24 to 44 (LAMLGIIGTILNLIVIIFVYI) threads the bilayer.

Interacts with ATPase ATP2A2/SERCA2. Interacts with ATPase ATP2A3/SERCA3; the interaction occurs at low levels in low glucose conditions and is increased by high glucose levels. As to expression, highly expressed in pancreatic islets where it is enriched in the insulin-producing beta cells.

It is found in the endoplasmic reticulum membrane. It localises to the extracellular vesicle membrane. In neurons, plays a role in the regulation of intracellular Ca(2+), possibly by acting as an activator of ATP2A2/SERCA2, thus increasing the efficiency with which Ca(2+) is removed from the cytoplasm. Inhibits differentiation of embryonic stem cells into neurons and inhibits neurite outgrowth, likely as a result of its role in intracellular Ca(2+) regulation. In pancreatic beta cells, lowers Ca(2+) levels in the endoplasmic reticulum and enhances glucose-stimulated insulin secretion. This chain is Protein TUNAR, found in Homo sapiens (Human).